The sequence spans 207 residues: Ribosomal RNA large subunit methyltransferase E (207 aa).

Residues Gly-60, Trp-62, Asp-80, Asp-96, and Asp-121 each contribute to the S-adenosyl-L-methionine site. The active-site Proton acceptor is the Lys-161.

Belongs to the class I-like SAM-binding methyltransferase superfamily. RNA methyltransferase RlmE family.

It is found in the cytoplasm. It carries out the reaction uridine(2552) in 23S rRNA + S-adenosyl-L-methionine = 2'-O-methyluridine(2552) in 23S rRNA + S-adenosyl-L-homocysteine + H(+). Its function is as follows. Specifically methylates the uridine in position 2552 of 23S rRNA at the 2'-O position of the ribose in the fully assembled 50S ribosomal subunit. The sequence is that of Ribosomal RNA large subunit methyltransferase E from Ectopseudomonas mendocina (strain ymp) (Pseudomonas mendocina).